The chain runs to 517 residues: Cytochrome P450 monooxygenase TRI4 (517 aa).

A helical membrane pass occupies residues Ala15–Leu37. Asn444 carries N-linked (GlcNAc...) asparagine glycosylation. Residue Cys452 participates in heme binding.

Belongs to the cytochrome P450 family. Heme serves as cofactor.

It localises to the membrane. It participates in sesquiterpene biosynthesis; trichothecene biosynthesis. In terms of biological role, cytochrome P450 monooxygenase; part of the gene cluster that mediates the production of the antimicrobial trichothecene harzianum A (HA) that plays a role in Botrytis cinerea antagonistic activity and plant defense priming. The biosynthesis of harzianum A begins with the cyclization of farnesyl diphosphate to trichodiene and is catalyzed by the trichodiene synthase TRI5. Trichodiene undergoes a series of oxygenations catalyzed by the cytochrome P450 monooxygenase TRI4. TRI4 controls the addition of 3 oxygens at C-2, C-11, and the C-12, C-13-epoxide to form the intermediate isotrichodiol. Isotrichodiol then undergoes a non-enzymatic isomerization and cyclization to form 12,13-epoxytrichothec-9-ene (EPT) which is further converted to trichodermol by the cytochrome P450 monooxygenase TRI11 via C-4 hydroxylation. The last step of HA synthesis is esterification of an octatriendioyl moiety to the C-4 oxygen of trichodermol. The octatriendioyl moiety is probably produced by the polyketide synthase TRI17 and the esterification performed by the trichothecene O-acetyltransferase TRI3. In Trichoderma arundinaceum, this protein is Cytochrome P450 monooxygenase TRI4.